The primary structure comprises 118 residues: Large ribosomal subunit protein bL19 (118 aa).

This sequence belongs to the bacterial ribosomal protein bL19 family.

This protein is located at the 30S-50S ribosomal subunit interface and may play a role in the structure and function of the aminoacyl-tRNA binding site. In Ligilactobacillus salivarius (strain UCC118) (Lactobacillus salivarius), this protein is Large ribosomal subunit protein bL19.